The chain runs to 154 residues: Protein X (154 aa).

The segment at 68-117 is mitochondrial targeting sequence; it reads PCALRFTSARRMETTVNAHQILPKVLHKRTLGLSAMSTTDLEAYFKDCLF.

The protein belongs to the orthohepadnavirus protein X family. May form homodimer. May interact with host CEBPA, CFLAR, CREB1, DDB1, E4F1, HBXIP, HSPD1/HSP60, NFKBIA, POLR2E and SMAD4. Interacts with host SMC5-SMC6 complex and induces its degradation. Interacts with host TRPC4AP; leading to prevent ubiquitination of TRPC4AP. Interacts with host PLSCR1; this interaction promotes ubiquitination and degradation of HBx and impairs HBx-mediated cell proliferation. In terms of processing, a fraction may be phosphorylated in insect cells and HepG2 cells, a human hepatoblastoma cell line. Phosphorylated in vitro by host protein kinase C or mitogen-activated protein kinase. N-acetylated in insect cells.

Its subcellular location is the host cytoplasm. The protein localises to the host nucleus. It localises to the host mitochondrion. In terms of biological role, multifunctional protein that plays a role in silencing host antiviral defenses and promoting viral transcription. Does not seem to be essential for HBV infection. May be directly involved in development of cirrhosis and liver cancer (hepatocellular carcinoma). Most of cytosolic activities involve modulation of cytosolic calcium. The effect on apoptosis is controversial depending on the cell types in which the studies have been conducted. May induce apoptosis by localizing in mitochondria and causing loss of mitochondrial membrane potential. May also modulate apoptosis by binding host CFLAR, a key regulator of the death-inducing signaling complex (DISC). Promotes viral transcription by using the host E3 ubiquitin ligase DDB1 to target the SMC5-SMC6 complex to proteasomal degradation. This host complex would otherwise bind to viral episomal DNA, and prevents its transcription. Moderately stimulates transcription of many different viral and cellular transcription elements. Promoters and enhancers stimulated by HBx contain DNA binding sites for NF-kappa-B, AP-1, AP-2, c-EBP, ATF/CREB, or the calcium-activated factor NF-AT. In Hepatitis B virus genotype E (isolate Cote d'Ivoire/ABI-212/2003) (HBV-E), this protein is Protein X.